The following is a 141-amino-acid chain: Large ribosomal subunit protein uL11 (141 aa).

Belongs to the universal ribosomal protein uL11 family. In terms of assembly, part of the ribosomal stalk of the 50S ribosomal subunit. Interacts with L10 and the large rRNA to form the base of the stalk. L10 forms an elongated spine to which L12 dimers bind in a sequential fashion forming a multimeric L10(L12)X complex. In terms of processing, one or more lysine residues are methylated.

Its function is as follows. Forms part of the ribosomal stalk which helps the ribosome interact with GTP-bound translation factors. The sequence is that of Large ribosomal subunit protein uL11 from Dinoroseobacter shibae (strain DSM 16493 / NCIMB 14021 / DFL 12).